A 380-amino-acid polypeptide reads, in one-letter code: Putative 12-oxophytodienoate reductase 4 (380 aa).

FMN-binding positions include 36-38, Ala69, and Gln111; that span reads PLT. 183–186 contacts substrate; sequence HGAH. Tyr188 (proton donor) is an active-site residue. Position 235 (Arg235) interacts with FMN. Residue Arg276 coordinates substrate. Residues Gly306 and 327-328 contribute to the FMN site; that span reads GR.

The protein belongs to the NADH:flavin oxidoreductase/NADH oxidase family. FMN is required as a cofactor.

Putative oxophytodienoate reductase that may be involved in the biosynthesis or metabolism of oxylipin signaling molecules. The polypeptide is Putative 12-oxophytodienoate reductase 4 (OPR4) (Oryza sativa subsp. japonica (Rice)).